The primary structure comprises 550 residues: MAKFQAPVINDNALGWGPCAIPDQFKDMPYQPFSKGDRLGKVADWTGATYQDKRYTNKYSSQFGGGSQYAYFHDEDETSFQLVDTTKMQKTAYQRNRMRFAQRNLRRDKDRRNMLQFNMQTLPKSAKQKERDRLRLQKKFQKQFGVRQKWDQRSQAQLKPRDSSVEVRSDWEVKEEMDFPRLMKMRYMEVADPTDIECCGAVEYYDKAFDRITTRNERPLRSIKRIFHTVTTTDDPVIRKLAKTQGNVFATDAILATLMCCTRSVNSWDIVVQRVGSKIFFDKRDNSDFDLLTVSETANEPPQDEVNSLNSPRNLAMEATYINHNFSQQCLRMGKEKHTFPNPNPFIEDDVDKNEVASVAYRYRRWKLGDDIDLVVRCEHDGVMTGANGEVSFINIKTLNEWDSKYCNGVDWRQKLDSQRGAVIATELKNNSYKLARWTCCALLAGSEYLKLGYVSRYNVKDSTRHVVLGTQQFKPNEFANQINLSMENAWGILRCVVDICMKLDEGKYLILKDPNKQVIRIYSLPDGTFSSDEEEDDDDEDEEVEEEES.

The interval 288–302 is RNA gate; sequence DFDLLTVSETANEPP. The segment at 526 to 550 is disordered; that stretch reads PDGTFSSDEEEDDDDEDEEVEEEES. Acidic residues predominate over residues 532–550; it reads SDEEEDDDDEDEEVEEEES.

This sequence belongs to the eIF-3 subunit D family. Component of the eukaryotic translation initiation factor 3 (eIF-3) complex, which is composed of 13 subunits: eif3a, eif3b, eif3c, eif3d, eif3e, eif3f, eif3g, eif3h, eif3i, eif3j, eif3k, eif3l and eif3m.

It localises to the cytoplasm. In terms of biological role, mRNA cap-binding component of the eukaryotic translation initiation factor 3 (eIF-3) complex, which is involved in protein synthesis of a specialized repertoire of mRNAs and, together with other initiation factors, stimulates binding of mRNA and methionyl-tRNAi to the 40S ribosome. The eIF-3 complex specifically targets and initiates translation of a subset of mRNAs involved in cell proliferation. In the eIF-3 complex, eif3d specifically recognizes and binds the 7-methylguanosine cap of a subset of mRNAs. This is Eukaryotic translation initiation factor 3 subunit D (eif3d) from Xenopus laevis (African clawed frog).